Here is a 176-residue protein sequence, read N- to C-terminus: Large ribosomal subunit protein uL6 (176 aa).

This sequence belongs to the universal ribosomal protein uL6 family. As to quaternary structure, part of the 50S ribosomal subunit.

In terms of biological role, this protein binds to the 23S rRNA, and is important in its secondary structure. It is located near the subunit interface in the base of the L7/L12 stalk, and near the tRNA binding site of the peptidyltransferase center. In Methanothrix thermoacetophila (strain DSM 6194 / JCM 14653 / NBRC 101360 / PT) (Methanosaeta thermophila), this protein is Large ribosomal subunit protein uL6.